Consider the following 304-residue polypeptide: UDP-N-acetylenolpyruvoylglucosamine reductase (304 aa).

The 166-residue stretch at Ile-33–Gly-198 folds into the FAD-binding PCMH-type domain. Residue Arg-177 is part of the active site. Ser-227 (proton donor) is an active-site residue. Glu-297 is an active-site residue.

This sequence belongs to the MurB family. FAD serves as cofactor.

Its subcellular location is the cytoplasm. The catalysed reaction is UDP-N-acetyl-alpha-D-muramate + NADP(+) = UDP-N-acetyl-3-O-(1-carboxyvinyl)-alpha-D-glucosamine + NADPH + H(+). It functions in the pathway cell wall biogenesis; peptidoglycan biosynthesis. Functionally, cell wall formation. The chain is UDP-N-acetylenolpyruvoylglucosamine reductase from Alkaliphilus metalliredigens (strain QYMF).